A 152-amino-acid polypeptide reads, in one-letter code: Transcriptional regulator MraZ (152 aa).

SpoVT-AbrB domains lie at 5-52 (ATLV…PLPE) and 81-124 (ASEC…DETT).

It belongs to the MraZ family. As to quaternary structure, forms oligomers.

The protein localises to the cytoplasm. Its subcellular location is the nucleoid. Negatively regulates its own expression and that of the subsequent genes in the proximal part of the division and cell wall (dcw) gene cluster. Acts by binding directly to DNA. May also regulate the expression of genes outside the dcw cluster. This Klebsiella pneumoniae (strain 342) protein is Transcriptional regulator MraZ.